The following is a 335-amino-acid chain: Phosphate acyltransferase (335 aa).

This sequence belongs to the PlsX family. In terms of assembly, homodimer. Probably interacts with PlsY.

It is found in the cytoplasm. It catalyses the reaction a fatty acyl-[ACP] + phosphate = an acyl phosphate + holo-[ACP]. Its pathway is lipid metabolism; phospholipid metabolism. In terms of biological role, catalyzes the reversible formation of acyl-phosphate (acyl-PO(4)) from acyl-[acyl-carrier-protein] (acyl-ACP). This enzyme utilizes acyl-ACP as fatty acyl donor, but not acyl-CoA. This is Phosphate acyltransferase from Heliobacterium modesticaldum (strain ATCC 51547 / Ice1).